A 155-amino-acid chain; its full sequence is Endoribonuclease YbeY (155 aa).

3 residues coordinate Zn(2+): H114, H118, and H124.

The protein belongs to the endoribonuclease YbeY family. It depends on Zn(2+) as a cofactor.

The protein resides in the cytoplasm. Single strand-specific metallo-endoribonuclease involved in late-stage 70S ribosome quality control and in maturation of the 3' terminus of the 16S rRNA. The chain is Endoribonuclease YbeY from Shigella dysenteriae serotype 1 (strain Sd197).